The primary structure comprises 1534 residues: Dicer-like protein 2 (1534 aa).

The segment covering 1-10 has biased composition (basic and acidic residues); the sequence is MDQDPRKDNP. The tract at residues 1-36 is disordered; the sequence is MDQDPRKDNPVEMDVDRDDSSQDPDDNESFKSALDE. Residues 11 to 27 show a composition bias toward acidic residues; the sequence is VEMDVDRDDSSQDPDDN. Residues 65-249 form the Helicase ATP-binding domain; that stretch reads TPAALTARAY…IEKLEQVLDA (185 aa). 78–85 is an ATP binding site; that stretch reads MFEASLKQ. The DEAH box motif lies at 192–195; sequence DEAH. Residues 404-575 form the Helicase C-terminal domain; sequence KVQTLLKVLA…NAELELLDDP (172 aa). A Dicer dsRNA-binding fold domain is found at 597–700; the sequence is ARSHLNHFCA…LPTKVSDFLA (104 aa). RNase III domains lie at 959–1107 and 1153–1353; these read MSLV…MCGG and LEPL…VDSG. Residues E1193, D1339, and E1342 each coordinate Mg(2+). Residues 1383-1483 form the DRBM domain; sequence HPNVELQILA…AEKGCLVIKA (101 aa). Residues 1492–1504 are compositionally biased toward basic and acidic residues; the sequence is KAAAKEDKGHNTE. The tract at residues 1492-1534 is disordered; it reads KAAAKEDKGHNTENGDANADNGQSGEKEEVPDCRDADGDTVMN. The span at 1505–1515 shows a compositional bias: polar residues; the sequence is NGDANADNGQS. The segment covering 1516-1528 has biased composition (basic and acidic residues); it reads GEKEEVPDCRDAD.

The protein belongs to the helicase family. Dicer subfamily. Mg(2+) serves as cofactor. Mn(2+) is required as a cofactor.

Its function is as follows. Dicer-like endonuclease involved in cleaving double-stranded RNA in the RNA interference (RNAi) pathway. Produces 21 to 25 bp dsRNAs (siRNAs) which target the selective destruction of homologous RNAs leading to sequence-specific suppression of gene expression, called post-transcriptional gene silencing (PTGS). Part of a broad host defense response against viral infection and transposons. Controls the expression of the non-LTR retrotransposon Tad in the African strain, Adiomopoume. This Neurospora crassa (strain ATCC 24698 / 74-OR23-1A / CBS 708.71 / DSM 1257 / FGSC 987) protein is Dicer-like protein 2 (dcl-2).